The primary structure comprises 465 residues: RuvB-like helicase 2 (465 aa).

72–79 (GPPSTGKT) contributes to the ATP binding site.

The protein belongs to the RuvB family. As to quaternary structure, may form heterododecamers with RVB1. Component of the SWR1 chromatin remodeling complex, the INO80 chromatin remodeling complex, and of the R2TP complex. Interacts with dil1.

The protein resides in the nucleus. It carries out the reaction ATP + H2O = ADP + phosphate + H(+). DNA helicase which participates in several chromatin remodeling complexes, including the SWR1 and the INO80 complexes. The SWR1 complex mediates the ATP-dependent exchange of histone H2A for the H2A variant HZT1 leading to transcriptional regulation of selected genes by chromatin remodeling. The INO80 complex remodels chromatin by shifting nucleosomes and is involved in DNA repair. Also involved in pre-rRNA processing. The polypeptide is RuvB-like helicase 2 (rvb2) (Schizosaccharomyces pombe (strain 972 / ATCC 24843) (Fission yeast)).